A 332-amino-acid polypeptide reads, in one-letter code: Adenosine deaminase (332 aa).

Residues histidine 12 and histidine 14 each contribute to the Zn(2+) site. Substrate-binding residues include histidine 14, aspartate 16, and glycine 170. Histidine 197 is a Zn(2+) binding site. Catalysis depends on glutamate 200, which acts as the Proton donor. Residue aspartate 278 coordinates Zn(2+). Aspartate 279 serves as a coordination point for substrate.

Belongs to the metallo-dependent hydrolases superfamily. Adenosine and AMP deaminases family. Adenosine deaminase subfamily. Zn(2+) is required as a cofactor.

The enzyme catalyses adenosine + H2O + H(+) = inosine + NH4(+). It carries out the reaction 2'-deoxyadenosine + H2O + H(+) = 2'-deoxyinosine + NH4(+). Its function is as follows. Catalyzes the hydrolytic deamination of adenosine and 2-deoxyadenosine. This is Adenosine deaminase from Yersinia enterocolitica serotype O:8 / biotype 1B (strain NCTC 13174 / 8081).